Reading from the N-terminus, the 202-residue chain is UPF0056 membrane protein CPn_1010/CP_0843/CPj1010/CpB1048 (202 aa).

6 consecutive transmembrane segments (helical) span residues 7 to 27, 39 to 59, 61 to 81, 105 to 125, 137 to 157, and 175 to 195; these read LSLLFYVLFDSPGSIPVFVAL, VILRECLFALGALILFVTFGR, FFQFLDISLYAFQIIGGFLLF, PIFFPLAFPVITGPAVITALL, IIFTAMIIAWAFSLFTLLCSS, and FGIALLLMSVNLMLKGISIAF.

This sequence belongs to the UPF0056 (MarC) family.

The protein localises to the cell membrane. The polypeptide is UPF0056 membrane protein CPn_1010/CP_0843/CPj1010/CpB1048 (Chlamydia pneumoniae (Chlamydophila pneumoniae)).